A 101-amino-acid chain; its full sequence is Pro-corazonin (101 aa).

The signal sequence occupies residues 1–19 (MVTNITLILTLMTLASVTA). The residue at position 20 (glutamine 20) is a Pyrrolidone carboxylic acid. The residue at position 30 (asparagine 30) is an Asparagine amide.

The protein belongs to the corazonin family.

It localises to the secreted. Its function is as follows. Cardioactive peptide. Corazonin is probably involved in the physiological regulation of the heart beat. In Bombyx mori (Silk moth), this protein is Pro-corazonin (crz).